The following is a 181-amino-acid chain: Large ribosomal subunit protein uL5 (181 aa).

The protein belongs to the universal ribosomal protein uL5 family. As to quaternary structure, part of the 50S ribosomal subunit; contacts the 5S rRNA and probably tRNA. Forms a bridge to the 30S subunit in the 70S ribosome.

Functionally, this is one of the proteins that bind and probably mediate the attachment of the 5S RNA into the large ribosomal subunit, where it forms part of the central protuberance. In the 70S ribosome it contacts protein S13 of the 30S subunit (bridge B1b), connecting the 2 subunits; this bridge is implicated in subunit movement. May contact the P site tRNA; the 5S rRNA and some of its associated proteins might help stabilize positioning of ribosome-bound tRNAs. The chain is Large ribosomal subunit protein uL5 from Methanococcus maripaludis (strain C7 / ATCC BAA-1331).